A 2564-amino-acid chain; its full sequence is Histone-lysine N-methyltransferase SETD2 (2564 aa).

Positions 1–11 are enriched in pro residues; it reads MKQLQPQPPPK. Positions 1–30 are disordered; that stretch reads MKQLQPQPPPKMGDFYDPEHPTPEEEENEA. A compositionally biased stretch (basic and acidic residues) spans 17 to 30; that stretch reads DPEHPTPEEEENEA. Position 131 is a phosphoserine (S131). Disordered stretches follow at residues 180–211, 272–561, and 607–626; these read STTV…VTEP, NEQA…TLSK, and PERE…DSPT. The span at 187 to 197 shows a compositional bias: pro residues; sequence PSSPPPPPPPA. Over residues 198–207 the composition is skewed to low complexity; it reads QATTLSSPAP. Over residues 278–290 the composition is skewed to basic and acidic residues; that stretch reads SSKKEDSHIGKDE. Phosphoserine is present on residues S321, S323, and S344. Composition is skewed to basic and acidic residues over residues 335–400, 421–432, 439–467, and 479–528; these read RSHD…ERER, RSERSHYYDSDR, PYRE…EYKK, and SYRD…EAIK. K359 is covalently cross-linked (Glycyl lysine isopeptide (Lys-Gly) (interchain with G-Cter in SUMO2)). A Phosphoserine modification is found at S422. Residues S532, S614, and S624 each carry the phosphoserine modification. The span at 616–625 shows a compositional bias: polar residues; the sequence is APSNRLNDSP. T626 carries the post-translational modification Phosphothreonine. A Glycyl lysine isopeptide (Lys-Gly) (interchain with G-Cter in SUMO2) cross-link involves residue K637. Phosphoserine occurs at positions 698, 708, 744, and 754. K776 participates in a covalent cross-link: Glycyl lysine isopeptide (Lys-Gly) (interchain with G-Cter in SUMO2). Disordered regions lie at residues 964-995, 1036-1101, 1133-1233, 1264-1352, and 1393-1443; these read EEGN…TSDD, EDYS…SDHW, LHKG…LGKT, QEKP…FSDQ, and LEKN…PGSA. Residues 971–994 show a composition bias toward basic and acidic residues; it reads PERRGRPEISLDERGEGGHVHTSD. A compositionally biased stretch (acidic residues) spans 1045–1058; the sequence is SNDESDSEDTDSDD. Over residues 1084-1095 the composition is skewed to low complexity; that stretch reads SPCSSRSSQSYR. S1098 is modified (phosphoserine). Over residues 1162 to 1171 the composition is skewed to polar residues; that stretch reads HPQSDGVDST. The span at 1172–1191 shows a compositional bias: basic and acidic residues; it reads SHTDVKSDPLGHPNSEETVK. A compositionally biased stretch (polar residues) spans 1215–1225; the sequence is KSWQQTTFQNR. S1228 carries the post-translational modification Phosphoserine. Polar residues predominate over residues 1265 to 1276; that stretch reads EKPSTTYQQPDS. Over residues 1393 to 1403 the composition is skewed to basic and acidic residues; that stretch reads LEKNDIKDRGP. Phosphoserine occurs at positions 1413, 1415, and 1417. The interaction with TUBA1A stretch occupies residues 1418–1714; sequence DGELQDRKKV…KKERSRKKDS (297 aa). Basic and acidic residues predominate over residues 1421-1431; it reads LQDRKKVRVEV. The AWS domain occupies 1494 to 1548; sequence IKRMQCECTPLSKDERAQGEIACGEDCLNRLLMIECSSRCPNGDYCSNRRFQRKQ. The Zn(2+) site is built by C1499, C1501, C1516, C1520, C1529, C1533, and C1539. The SET domain maps to 1550–1667; sequence ADVEVILTEK…SGSELTFDYQ (118 aa). S-adenosyl-L-methionine-binding positions include 1560–1562, 1603–1605, and 1628–1629; these read KGW, HYY, and NH. Residue C1631 coordinates Zn(2+). The Post-SET domain maps to 1674-1690; the sequence is EAQKCFCGSANCRGYLG. Q1676 is a binding site for S-adenosyl-L-methionine. C1678 is a Zn(2+) binding site. F1679 lines the S-adenosyl-L-methionine pocket. Zn(2+) contacts are provided by C1680 and C1685. Residues S1696, S1844, and S1845 each carry the phosphoserine modification. A disordered region spans residues 1831 to 1872; that stretch reads KTAVPPLSEGDGYSSENTSRAHTPLNTPDPSTKLSTEADTDT. A compositionally biased stretch (polar residues) spans 1844–1867; it reads SSENTSRAHTPLNTPDPSTKLSTE. 2 positions are modified to phosphothreonine: T1853 and T1872. Residue S1888 is modified to Phosphoserine. Positions 1921-2142 are disordered; it reads EELQSQQLLP…EAQKQQQQMQ (222 aa). Residues 1924–1935 show a composition bias toward low complexity; that stretch reads QSQQLLPQQLPE. S1952 carries the phosphoserine modification. Positions 1960-1972 are enriched in basic and acidic residues; sequence IEPKESNGTKLEE. Positions 1973-1990 are enriched in acidic residues; that stretch reads PINEETPSQDEEEGVSDV. A phosphoserine mark is found at S1980, S1988, and S1995. Composition is skewed to basic and acidic residues over residues 1991 to 2004, 2014 to 2046, and 2059 to 2072; these read ESER…KTVD, DSWK…DAVG, and RSRE…TQNK. Phosphoserine is present on residues S2080 and S2082. Basic and acidic residues-rich tracts occupy residues 2090 to 2100 and 2111 to 2135; these read RGTKRPDDRYD and KDRN…REAQ. The stretch at 2117 to 2146 forms a coiled coil; sequence STEERRKLFEQEVAQREAQKQQQQMQNLGM. A low charge region region spans residues 2137-2366; that stretch reads QQQQMQNLGM…APGQPQPLQP (230 aa). One can recognise a WW domain in the interval 2389 to 2422; the sequence is IVLPPNWKTARDPEGKIYYYHVITRQTQWDPPTW. Residues 2439-2465 form a disordered region; the sequence is LGTPTYDENPMKASKKPKTAEADTSSE. Residues 2457–2564 form an interaction with POLR2A region; that stretch reads TAEADTSSEL…YKPKEDTELE (108 aa).

Belongs to the class V-like SAM-binding methyltransferase superfamily. Histone-lysine methyltransferase family. SET2 subfamily. Specifically interacts with hyperphosphorylated C-terminal domain (CTD) of RNA polymerase II large subunit (POLR2A): binds to CTD heptad repeats doubly phosphorylated on 'Ser-2' and 'Ser-5' of each heptad. Interacts with HTT. Interacts with IWS1. Interacts with p53/TP53; leading to regulate p53/TP53 target genes. Component of a complex with HNRNPL. Interacts with TUBA1A; the interaction is independent on alpha-tubulin acetylation on 'Lys-40'. Interacts with STAT1. In terms of processing, may be automethylated. As to expression, ubiquitously expressed.

The protein resides in the nucleus. The protein localises to the chromosome. It catalyses the reaction L-lysyl(36)-[histone H3] + 3 S-adenosyl-L-methionine = N(6),N(6),N(6)-trimethyl-L-lysyl(36)-[histone H3] + 3 S-adenosyl-L-homocysteine + 3 H(+). The enzyme catalyses L-lysyl-[protein] + S-adenosyl-L-methionine = N(6)-methyl-L-lysyl-[protein] + S-adenosyl-L-homocysteine + H(+). The catalysed reaction is L-lysyl-[protein] + 3 S-adenosyl-L-methionine = N(6),N(6),N(6)-trimethyl-L-lysyl-[protein] + 3 S-adenosyl-L-homocysteine + 3 H(+). Specifically inhibited by sinefungin derivatives. N-propyl sinefungin (Pr-SNF) interacts preferentially with SETD2. Histone methyltransferase that specifically trimethylates 'Lys-36' of histone H3 (H3K36me3) using dimethylated 'Lys-36' (H3K36me2) as substrate. It is capable of trimethylating unmethylated H3K36 (H3K36me0) in vitro. Represents the main enzyme generating H3K36me3, a specific tag for epigenetic transcriptional activation. Plays a role in chromatin structure modulation during elongation by coordinating recruitment of the FACT complex and by interacting with hyperphosphorylated POLR2A. Acts as a key regulator of DNA mismatch repair in G1 and early S phase by generating H3K36me3, a mark required to recruit MSH6 subunit of the MutS alpha complex: early recruitment of the MutS alpha complex to chromatin to be replicated allows a quick identification of mismatch DNA to initiate the mismatch repair reaction. Required for DNA double-strand break repair in response to DNA damage: acts by mediating formation of H3K36me3, promoting recruitment of RAD51 and DNA repair via homologous recombination (HR). Acts as a tumor suppressor. H3K36me3 also plays an essential role in the maintenance of a heterochromatic state, by recruiting DNA methyltransferase DNMT3A. H3K36me3 is also enhanced in intron-containing genes, suggesting that SETD2 recruitment is enhanced by splicing and that splicing is coupled to recruitment of elongating RNA polymerase. Required during angiogenesis. Required for endoderm development by promoting embryonic stem cell differentiation toward endoderm: acts by mediating formation of H3K36me3 in distal promoter regions of FGFR3, leading to regulate transcription initiation of FGFR3. In addition to histones, also mediates methylation of other proteins, such as tubulins and STAT1. Trimethylates 'Lys-40' of alpha-tubulins such as TUBA1B (alpha-TubK40me3); alpha-TubK40me3 is required for normal mitosis and cytokinesis and may be a specific tag in cytoskeletal remodeling. Involved in interferon-alpha-induced antiviral defense by mediating both monomethylation of STAT1 at 'Lys-525' and catalyzing H3K36me3 on promoters of some interferon-stimulated genes (ISGs) to activate gene transcription. In terms of biological role, (Microbial infection) Recruited to the promoters of adenovirus 12 E1A gene in case of infection, possibly leading to regulate its expression. This Homo sapiens (Human) protein is Histone-lysine N-methyltransferase SETD2 (SETD2).